Reading from the N-terminus, the 38-residue chain is Large ribosomal subunit protein bL36 (38 aa).

This sequence belongs to the bacterial ribosomal protein bL36 family.

This chain is Large ribosomal subunit protein bL36, found in Polynucleobacter necessarius subsp. necessarius (strain STIR1).